The sequence spans 600 residues: Methionine--tRNA ligase (600 aa).

Residues 11 to 21 (PYANGPRHIGH) carry the 'HIGH' region motif. 4 residues coordinate Zn(2+): cysteine 143, cysteine 146, cysteine 156, and cysteine 159. Residues 350 to 354 (QFSSS) carry the 'KMSKS' region motif. Serine 353 is an ATP binding site.

Belongs to the class-I aminoacyl-tRNA synthetase family. MetG type 1 subfamily. Monomer. Zn(2+) serves as cofactor.

The protein resides in the cytoplasm. The enzyme catalyses tRNA(Met) + L-methionine + ATP = L-methionyl-tRNA(Met) + AMP + diphosphate. Its function is as follows. Is required not only for elongation of protein synthesis but also for the initiation of all mRNA translation through initiator tRNA(fMet) aminoacylation. The polypeptide is Methionine--tRNA ligase (Kineococcus radiotolerans (strain ATCC BAA-149 / DSM 14245 / SRS30216)).